Here is a 529-residue protein sequence, read N- to C-terminus: BAR/IMD domain-containing adapter protein 2-like 2 (529 aa).

Residues 1-239 (MAPEMDQFYR…HSPGLLGPAL (239 aa)) enclose the IMD domain. Disordered regions lie at residues 221–327 (EASR…GGAR) and 403–510 (TSMS…TNPF). Residues Ser231, Ser272, and Ser302 each carry the phosphoserine modification. Residues 299 to 313 (SASSLYSGSAQSSRS) are compositionally biased toward low complexity. Residues 324 to 387 (GGARRVRALV…PEAYVKALEE (64 aa)) form the SH3 domain. Composition is skewed to low complexity over residues 403–413 (TSMSPMTPMNP) and 452–462 (RSRTPSRVPSR). Pro residues predominate over residues 463 to 472 (APSPAPPPLP). Ser478 and Ser481 each carry phosphoserine.

Expressed in the epithelial layer of the intestine (at protein level).

It is found in the cell membrane. The protein resides in the cell junction. It localises to the cytoplasmic vesicle membrane. Phosphoinositides-binding protein that induces the formation of planar or gently curved membrane structures. Binds to phosphoinositides, including to phosphatidylinositol 4,5-bisphosphate (PtdIns(4,5)P2) headgroups. There seems to be no clear preference for a specific phosphoinositide. The polypeptide is BAR/IMD domain-containing adapter protein 2-like 2 (BAIAP2L2) (Homo sapiens (Human)).